A 234-amino-acid polypeptide reads, in one-letter code: Sugar fermentation stimulation protein A (234 aa).

Residues 201–220 constitute a DNA-binding region (H-T-H motif); sequence LLSEAQQRGVEILAYKAEIS.

It belongs to the SfsA family.

Its function is as follows. Binds to DNA non-specifically. Could be a regulatory factor involved in maltose metabolism. The sequence is that of Sugar fermentation stimulation protein A from Shigella flexneri.